The primary structure comprises 300 residues: Centromere protein O (300 aa).

Coiled-coil stretches lie at residues 18–42 (LAHLERLETQVSRSRKQSEELQSVQ) and 83–109 (NQTVEINEQEALEEKLENVKAILQAYH). A Phosphoserine modification is found at S35.

Belongs to the CENP-O/MCM21 family. As to quaternary structure, component of the CENPA-CAD complex, composed of CENPI, CENPK, CENPL, CENPO, CENPP, CENPQ, CENPR and CENPS. The CENPA-CAD complex interacts with the CENPA-NAC complex, at least composed of CENPA, CENPC, CENPH, CENPM, CENPN, CENPT and CENPU.

It localises to the nucleus. Its subcellular location is the chromosome. The protein resides in the centromere. It is found in the kinetochore. In terms of biological role, component of the CENPA-CAD (nucleosome distal) complex, a complex recruited to centromeres which is involved in assembly of kinetochore proteins, mitotic progression and chromosome segregation. May be involved in incorporation of newly synthesized CENPA into centromeres via its interaction with the CENPA-NAC complex. Modulates the kinetochore-bound levels of NDC80 complex. The polypeptide is Centromere protein O (CENPO) (Homo sapiens (Human)).